The primary structure comprises 335 residues: NADH-quinone oxidoreductase subunit H (335 aa).

8 helical membrane passes run 15 to 35 (VVKAIVVLLAVVVCGALLSFV), 81 to 101 (MIFTLAPVVAMSALLIGFSII), 114 to 134 (IGLLFFFAMAGLSVYAVLFAG), 154 to 174 (VSYEVFLGLALMGVVVQVGSF), 187 to 207 (LWFIIPQFFGFCTFFIAGVAV), 238 to 258 (FFVGEYIGIILISALLVTLFF), 270 to 290 (QVPFLWFALKTAFFIMLFILL), and 307 to 327 (WKFCLPLTLINLLVTAAIVLY).

The protein belongs to the complex I subunit 1 family. As to quaternary structure, NDH-1 is composed of 13 different subunits. Subunits NuoA, H, J, K, L, M, N constitute the membrane sector of the complex.

The protein resides in the cell inner membrane. It catalyses the reaction a quinone + NADH + 5 H(+)(in) = a quinol + NAD(+) + 4 H(+)(out). NDH-1 shuttles electrons from NADH, via FMN and iron-sulfur (Fe-S) centers, to quinones in the respiratory chain. The immediate electron acceptor for the enzyme in this species is believed to be ubiquinone. Couples the redox reaction to proton translocation (for every two electrons transferred, four hydrogen ions are translocated across the cytoplasmic membrane), and thus conserves the redox energy in a proton gradient. This subunit may bind ubiquinone. This is NADH-quinone oxidoreductase subunit H from Pseudomonas putida (strain GB-1).